A 660-amino-acid polypeptide reads, in one-letter code: MEVLDATGLAERLRWEDNDYLLHLKAETSFDKYPAKQHARRVQAELGVEDGLIYLPGQPARNNEDSDMPAPFRQRRYFYYMSGCDEPDCHLMYDIRRDVLTLFIPRIKPERVIWNGRGSTPAEALAKYDIDQVHHSQDLAYIIQNWAFKHQNTGIYILHPSSRIPGCDNLMPRIDSHSLQPAMNLCRMIKDDHEIKRIRKANDISSQAHREVLANIQKYKNEAQVEGLFMDVCISRQAKQQAYDPIAASGPNAGTLHYDANNEDLAGRQLMCLDAGCEFELYASDITRTFPLSASWPSKEAENIYNLVQRMQETCIERLEPGVRYLDLHIMAHQVAIDGLLRLGILCNGTREEIYKAGTSRAFFPHGLGHHIGLEVHDVGQAELMSVRRGKPVYQQAPSLYPENFHDPVYDSETCHAPTDPQSSHLEEGMVVTVEPGIYFSVYALQHFYLPSPIHSKFINLEVLERYLPVGGVRIEDDILITANGHENLTTAPKGEAMLDMIRQGKPGTTDVLIPSPTYSRRMRSENNTPRLCAPGISKNTLRPLLTPLARAATLPTEFRQQDDFDFEPTVGPSLFSGFSRAMTTEEKIQQWKQKRDSVPVALNRPTKAKSLSPVCGENTPNVQHVYMSTASDLASFSQLSAGSGSTPLWKPHNKQDKKN.

4 residues coordinate Mn(2+): aspartate 274, aspartate 285, glutamate 435, and glutamate 476. Positions 641–660 are disordered; the sequence is SAGSGSTPLWKPHNKQDKKN.

It belongs to the peptidase M24B family. Mn(2+) is required as a cofactor.

It carries out the reaction Release of any N-terminal amino acid, including proline, that is linked to proline, even from a dipeptide or tripeptide.. Catalyzes the removal of a penultimate prolyl residue from the N-termini of peptides. This chain is Probable Xaa-Pro aminopeptidase PTRG_10574, found in Pyrenophora tritici-repentis (strain Pt-1C-BFP) (Wheat tan spot fungus).